Reading from the N-terminus, the 175-residue chain is Cytidylate kinase (175 aa).

7–15 (GQPGSGKTS) contributes to the ATP binding site.

It belongs to the cytidylate kinase family. Type 2 subfamily.

It localises to the cytoplasm. It carries out the reaction CMP + ATP = CDP + ADP. It catalyses the reaction dCMP + ATP = dCDP + ADP. The polypeptide is Cytidylate kinase (Methanocella arvoryzae (strain DSM 22066 / NBRC 105507 / MRE50)).